The primary structure comprises 179 residues: Large ribosomal subunit protein uL5 (179 aa).

This sequence belongs to the universal ribosomal protein uL5 family. As to quaternary structure, part of the 50S ribosomal subunit; part of the 5S rRNA/L5/L18/L25 subcomplex. Contacts the 5S rRNA and the P site tRNA. Forms a bridge to the 30S subunit in the 70S ribosome.

This is one of the proteins that bind and probably mediate the attachment of the 5S RNA into the large ribosomal subunit, where it forms part of the central protuberance. In the 70S ribosome it contacts protein S13 of the 30S subunit (bridge B1b), connecting the 2 subunits; this bridge is implicated in subunit movement. Contacts the P site tRNA; the 5S rRNA and some of its associated proteins might help stabilize positioning of ribosome-bound tRNAs. The chain is Large ribosomal subunit protein uL5 from Burkholderia ambifaria (strain MC40-6).